A 581-amino-acid chain; its full sequence is AP2-like ethylene-responsive transcription factor AIL6 (581 aa).

Disordered regions lie at residues 105-132 (VRYS…HHNQ) and 205-240 (NNTN…TDSE). Composition is skewed to low complexity over residues 108–122 (SDNS…SLTQ) and 218–232 (RGNN…NNNN). DNA-binding regions (AP2/ERF) lie at residues 268–331 (IYRG…TNFP) and 367–425 (IYRG…TNFE).

Belongs to the AP2/ERF transcription factor family. AP2 subfamily. In terms of tissue distribution, expressed in roots, seedlings, hypocotyl, inflorescence, siliques, and pistils. Also detected at low levels in leaves.

It is found in the nucleus. Functionally, probably acts as a transcriptional activator. Binds to the GCC-box pathogenesis-related promoter element. May be involved in the regulation of gene expression by stress factors and by components of stress signal transduction pathways. The sequence is that of AP2-like ethylene-responsive transcription factor AIL6 from Arabidopsis thaliana (Mouse-ear cress).